The sequence spans 257 residues: Baramicin A1 (257 aa).

The signal sequence occupies residues 1-19 (MKSFGLIALAICGVICVAA). Residues 20–21 (EP) constitute a propeptide that is removed on maturation. Gln22 bears the Pyrrolidone carboxylic acid mark. The interval 95–122 (GPNFSAKNLGPNGAKSVGIPQRARRSPQ) is disordered. N-linked (GlcNAc...) asparagine glycosylation is present at Asn97. Positions 118-121 (RRSP) are excised as a propeptide. Gln122 bears the Pyrrolidone carboxylic acid mark. Residues 145–148 (RRSP) constitute a propeptide that is removed on maturation. Gln149 carries the pyrrolidone carboxylic acid modification. Residues 172-175 (RRSP) constitute a propeptide that is removed on maturation. At Gln176 the chain carries Pyrrolidone carboxylic acid. A propeptide spanning residues 199 to 204 (RRGIND) is cleaved from the precursor. Asn225 carries N-linked (GlcNAc...) asparagine glycosylation.

In terms of processing, proteolytically cleaved. Hemolymph (at protein level).

Its subcellular location is the secreted. Secreted immune-induced peptides induced by Toll signaling. Has a significant role in resistance to infection by the entomopathogenic fungus B.bassiana R444 and weak antifungal activity against M.rileyi PHP1705. In adult males, activity appears to be important for neuromuscular processes that mediate correct wing posture upon Toll activation. The protein is Baramicin A1 of Drosophila melanogaster (Fruit fly).